A 261-amino-acid chain; its full sequence is Lysosome-associated membrane glycoprotein 5 (261 aa).

Positions 1–29 (MDLQGRAVPSVDRLRVLLMLFHTMAQIMA) are cleaved as a signal peptide. Topologically, residues 30-234 (EQEVENLSGL…AVDEREQLEE (205 aa)) are extracellular. N35, N53, and N126 each carry an N-linked (GlcNAc...) asparagine glycan. A helical transmembrane segment spans residues 235–255 (TLPLILGLILGLVIVVTLAIY). Topologically, residues 256 to 261 (HVHPQK) are cytoplasmic.

The protein belongs to the LAMP family. In terms of processing, glycosylated.

The protein localises to the cytoplasmic vesicle membrane. Its subcellular location is the cell membrane. The protein resides in the cell projection. It localises to the dendrite. It is found in the cytoplasmic vesicle. The protein localises to the secretory vesicle. Its subcellular location is the synaptic vesicle membrane. The protein resides in the growth cone membrane. It localises to the early endosome membrane. It is found in the recycling endosome. The protein localises to the endoplasmic reticulum-Golgi intermediate compartment membrane. Its subcellular location is the endosome membrane. Functionally, plays a role in short-term synaptic plasticity in a subset of GABAergic neurons in the brain. The sequence is that of Lysosome-associated membrane glycoprotein 5 (LAMP5) from Pongo abelii (Sumatran orangutan).